The chain runs to 518 residues: Putative ribose/galactose/methyl galactoside import ATP-binding protein (518 aa).

The disordered stretch occupies residues 1 to 22 (MSIAVLDRPMSRQDTPSASSVP). The span at 12–22 (RQDTPSASSVP) shows a compositional bias: polar residues. ABC transporter domains are found at residues 29–265 (LEVR…VGRE) and 275–515 (VPIG…VMEL). 61-68 (GENGAGKS) is an ATP binding site.

Belongs to the ABC transporter superfamily. Carbohydrate importer 2 (CUT2) (TC 3.A.1.2) family.

The protein localises to the cell inner membrane. The enzyme catalyses D-ribose(out) + ATP + H2O = D-ribose(in) + ADP + phosphate + H(+). It carries out the reaction D-galactose(out) + ATP + H2O = D-galactose(in) + ADP + phosphate + H(+). Its function is as follows. Part of an ABC transporter complex involved in carbohydrate import. Could be involved in ribose, galactose and/or methyl galactoside import. Responsible for energy coupling to the transport system. In Ralstonia nicotianae (strain ATCC BAA-1114 / GMI1000) (Ralstonia solanacearum), this protein is Putative ribose/galactose/methyl galactoside import ATP-binding protein.